Reading from the N-terminus, the 179-residue chain is Large ribosomal subunit protein uL5 (179 aa).

As to quaternary structure, contacts the P site tRNA. Forms a bridge to the 30S subunit in the 70S ribosome. Part of the 50S ribosomal subunit. Part of the 5S rRNA/L5/L18 subcomplex; in this organism only 2 proteins, L5 and L18 have been shown to be part of the 5S rRNA subcomplex, unlike E.coli and T.thermophilus where L25 (TL5) is also found. Has been shown to bind 5S rRNA.

This is one of the proteins that bind and probably mediate the attachment of the 5S RNA into the large ribosomal subunit, where it forms part of the central protuberance. In the 70S ribosome it contacts protein S13 of the 30S subunit (bridge B1b), connecting the 2 subunits; this bridge is implicated in subunit movement. Contacts the P site tRNA; the 5S rRNA and some of its associated proteins might help stabilize positioning of ribosome-bound tRNAs. In Geobacillus stearothermophilus (Bacillus stearothermophilus), this protein is Large ribosomal subunit protein uL5 (rplE).